The primary structure comprises 86 residues: Muscarinic toxin 2 (86 aa).

Residues 1–21 (MKTLLLTLVVVTIVCLDLGYT) form the signal peptide. 4 disulfides stabilise this stretch: Cys-24-Cys-45, Cys-38-Cys-63, Cys-67-Cys-78, and Cys-79-Cys-84.

The protein belongs to the three-finger toxin family. Short-chain subfamily. Aminergic toxin sub-subfamily. Monomer. As to expression, expressed by the venom gland.

It localises to the secreted. In terms of biological role, binds irreversibly to M1 (CHRM1) muscarinic acetylcholine receptors, and reveals a slightly weaker effect on M3 (CHRM3) receptors. The mechanism of toxin-receptor interaction comprises at least two steps. The first step is fast with no competition between the toxin and the antagonist. The second step is slow with formation of a more stable toxin-receptor complex and inhibition of the antagonist binding. The sequence is that of Muscarinic toxin 2 from Dendroaspis angusticeps (Eastern green mamba).